Here is a 209-residue protein sequence, read N- to C-terminus: High frequency lysogenization protein HflD homolog (209 aa).

This sequence belongs to the HflD family.

The protein resides in the cytoplasm. It localises to the cell inner membrane. This Saccharophagus degradans (strain 2-40 / ATCC 43961 / DSM 17024) protein is High frequency lysogenization protein HflD homolog.